The following is a 126-amino-acid chain: Histone H2B type 2-E (126 aa).

Low complexity predominate over residues 1–12 (MPEPAKSAPAPK). Positions 1-35 (MPEPAKSAPAPKKGSKKAVTKAQKKDGKKRKRSRK) are disordered. An N-acetylproline modification is found at P2. Position 3 is an ADP-ribosyl glutamic acid (E3). An N6-(2-hydroxyisobutyryl)lysine; alternate modification is found at K6. K6 carries the N6-(beta-hydroxybutyryl)lysine; alternate modification. K6 carries the N6-acetyllysine; alternate modification. K6 bears the N6-butyryllysine; alternate mark. The residue at position 6 (K6) is an N6-crotonyllysine; alternate. K6 bears the N6-lactoyllysine; alternate mark. K6 is covalently cross-linked (Glycyl lysine isopeptide (Lys-Gly) (interchain with G-Cter in SUMO2); alternate). S7 is modified (ADP-ribosylserine). An N6-(beta-hydroxybutyryl)lysine; alternate modification is found at K12. Residues K12 and K13 each carry the N6-acetyllysine; alternate modification. An N6-crotonyllysine; alternate mark is found at K12 and K13. Residue K12 is modified to N6-lactoyllysine; alternate. At K13 the chain carries N6-(2-hydroxyisobutyryl)lysine; alternate. Residue S15 is modified to Phosphoserine; by STK4/MST1. 4 positions are modified to N6-acetyllysine; alternate: K16, K17, K21, and K24. Residues K16, K17, K21, and K24 each carry the N6-crotonyllysine; alternate modification. An N6-lactoyllysine; alternate mark is found at K16, K17, K21, and K24. K17 and K21 each carry N6-(beta-hydroxybutyryl)lysine; alternate. K17 carries the N6-glutaryllysine; alternate modification. 2 positions are modified to N6-(2-hydroxyisobutyryl)lysine; alternate: K21 and K24. K21 bears the N6-butyryllysine; alternate mark. K21 participates in a covalent cross-link: Glycyl lysine isopeptide (Lys-Gly) (interchain with G-Cter in SUMO2); alternate. At K25 the chain carries N6-(2-hydroxyisobutyryl)lysine. K35 bears the N6-(2-hydroxyisobutyryl)lysine; alternate mark. Residue K35 is modified to N6-(beta-hydroxybutyryl)lysine; alternate. Residue K35 is modified to N6-crotonyllysine; alternate. K35 bears the N6-glutaryllysine; alternate mark. N6-succinyllysine; alternate is present on K35. A Glycyl lysine isopeptide (Lys-Gly) (interchain with G-Cter in ubiquitin); alternate cross-link involves residue K35. E36 carries the polyADP-ribosyl glutamic acid modification. S37 is subject to Phosphoserine; by AMPK. N6-(2-hydroxyisobutyryl)lysine; alternate occurs at positions 44, 47, and 58. An N6-lactoyllysine; alternate modification is found at K44. An N6-glutaryllysine; alternate mark is found at K44 and K47. K47 carries the N6-methyllysine; alternate modification. K58 is subject to N6,N6-dimethyllysine; alternate. Residue R80 is modified to Dimethylated arginine. K86 is modified (N6-(2-hydroxyisobutyryl)lysine; alternate). Residue K86 is modified to N6-(beta-hydroxybutyryl)lysine; alternate. K86 is modified (N6-acetyllysine; alternate). K86 is modified (N6-lactoyllysine; alternate). At K86 the chain carries N6,N6,N6-trimethyllysine; alternate. Omega-N-methylarginine is present on residues R87 and R93. K109 bears the N6-(2-hydroxyisobutyryl)lysine; alternate mark. K109 carries the N6-lactoyllysine; alternate modification. K109 carries the post-translational modification N6-glutaryllysine; alternate. K109 is subject to N6-methyllysine; alternate. A glycan (O-linked (GlcNAc) serine) is linked at S113. T116 is subject to Phosphothreonine. 2 positions are modified to N6-(2-hydroxyisobutyryl)lysine; alternate: K117 and K121. An N6-(beta-hydroxybutyryl)lysine; alternate mark is found at K117 and K121. An N6-lactoyllysine; alternate mark is found at K117 and K121. K117 and K121 each carry N6-glutaryllysine; alternate. K117 and K121 each carry N6-succinyllysine; alternate. The residue at position 117 (K117) is an N6-malonyllysine; alternate. Residue K117 is modified to N6-methylated lysine; alternate. K121 participates in a covalent cross-link: Glycyl lysine isopeptide (Lys-Gly) (interchain with G-Cter in ubiquitin); alternate.

It belongs to the histone H2B family. As to quaternary structure, the nucleosome is a histone octamer containing two molecules each of H2A, H2B, H3 and H4 assembled in one H3-H4 heterotetramer and two H2A-H2B heterodimers. The octamer wraps approximately 147 bp of DNA. Monoubiquitination at Lys-35 (H2BK34Ub) by the MSL1/MSL2 dimer is required for histone H3 'Lys-4' (H3K4me) and 'Lys-79' (H3K79me) methylation and transcription activation at specific gene loci, such as HOXA9 and MEIS1 loci. Similarly, monoubiquitination at Lys-121 (H2BK120Ub) by the RNF20/40 complex gives a specific tag for epigenetic transcriptional activation and is also prerequisite for histone H3 'Lys-4' and 'Lys-79' methylation. It also functions cooperatively with the FACT dimer to stimulate elongation by RNA polymerase II. H2BK120Ub also acts as a regulator of mRNA splicing: deubiquitination by USP49 is required for efficient cotranscriptional splicing of a large set of exons. In terms of processing, phosphorylation at Ser-37 (H2BS36ph) by AMPK in response to stress promotes transcription. Phosphorylated on Ser-15 (H2BS14ph) by STK4/MST1 during apoptosis; which facilitates apoptotic chromatin condensation. Also phosphorylated on Ser-15 in response to DNA double strand breaks (DSBs), and in correlation with somatic hypermutation and immunoglobulin class-switch recombination. Post-translationally, glcNAcylation at Ser-113 promotes monoubiquitination of Lys-121. It fluctuates in response to extracellular glucose, and associates with transcribed genes. ADP-ribosylated by PARP1 or PARP2 on Ser-7 (H2BS6ADPr) in response to DNA damage. H2BS6ADPr promotes recruitment of CHD1L. Mono-ADP-ribosylated on Glu-3 (H2BE2ADPr) by PARP3 in response to single-strand breaks. Poly ADP-ribosylation on Glu-36 (H2BE35ADPr) by PARP1 regulates adipogenesis: it inhibits phosphorylation at Ser-37 (H2BS36ph), thereby blocking expression of pro-adipogenetic genes. In terms of processing, crotonylation (Kcr) is specifically present in male germ cells and marks testis-specific genes in post-meiotic cells, including X-linked genes that escape sex chromosome inactivation in haploid cells. Crotonylation marks active promoters and enhancers and confers resistance to transcriptional repressors. It is also associated with post-meiotically activated genes on autosomes. Post-translationally, lactylated in macrophages by EP300/P300 by using lactoyl-CoA directly derived from endogenous or exogenous lactate, leading to stimulates gene transcription.

It is found in the nucleus. It localises to the chromosome. Core component of nucleosome. Nucleosomes wrap and compact DNA into chromatin, limiting DNA accessibility to the cellular machineries which require DNA as a template. Histones thereby play a central role in transcription regulation, DNA repair, DNA replication and chromosomal stability. DNA accessibility is regulated via a complex set of post-translational modifications of histones, also called histone code, and nucleosome remodeling. In terms of biological role, has broad antibacterial activity. May contribute to the formation of the functional antimicrobial barrier of the colonic epithelium, and to the bactericidal activity of amniotic fluid. This is Histone H2B type 2-E from Homo sapiens (Human).